The primary structure comprises 145 residues: Large ribosomal subunit protein uL11 (145 aa).

This sequence belongs to the universal ribosomal protein uL11 family. Part of the ribosomal stalk of the 50S ribosomal subunit. Interacts with L10 and the large rRNA to form the base of the stalk. L10 forms an elongated spine to which L12 dimers bind in a sequential fashion forming a multimeric L10(L12)X complex. In terms of processing, one or more lysine residues are methylated.

Functionally, forms part of the ribosomal stalk which helps the ribosome interact with GTP-bound translation factors. The sequence is that of Large ribosomal subunit protein uL11 from Rickettsia akari (strain Hartford).